We begin with the raw amino-acid sequence, 97 residues long: Small ribosomal subunit protein bS21 (97 aa).

The tract at residues 37–97 is disordered; sequence EKPSVRKARE…APASSPTTTA (61 aa). Low complexity predominate over residues 76–97; the sequence is RAVAPRRPAAAPAPASSPTTTA.

The protein belongs to the bacterial ribosomal protein bS21 family.

The chain is Small ribosomal subunit protein bS21 from Methylobacterium sp. (strain 4-46).